Reading from the N-terminus, the 184-residue chain is Glutathione-regulated potassium-efflux system ancillary protein KefG (184 aa).

The protein belongs to the NAD(P)H dehydrogenase (quinone) family. KefG subfamily. Interacts with KefB.

Its subcellular location is the cell inner membrane. The catalysed reaction is a quinone + NADH + H(+) = a quinol + NAD(+). The enzyme catalyses a quinone + NADPH + H(+) = a quinol + NADP(+). Its function is as follows. Regulatory subunit of a potassium efflux system that confers protection against electrophiles. Required for full activity of KefB. The polypeptide is Glutathione-regulated potassium-efflux system ancillary protein KefG (Erwinia tasmaniensis (strain DSM 17950 / CFBP 7177 / CIP 109463 / NCPPB 4357 / Et1/99)).